Consider the following 249-residue polypeptide: MVEMNFKVDAFEGPLDLLLHLIGQLEVDIYDIPMAEITDQYMEFVHTMQEMELDVASEYLVMAATLLAIKSKMLLPKQELEIDYDTLEEEEDPRDALVEKLMEYKRFKEAAKELKEKEAERSFYFSKPPMDLAEYDDGTKVAELDVSLNDMLSAFNKMLRRKKLNKPLHTRITTQEISIDERMDSVLGKLHQQVNHRLRFDELFEEQTKEQLVVTFLALLELMKRKLVEVEQAESFADLYVQGKGEELS.

The protein belongs to the ScpA family. Component of a cohesin-like complex composed of ScpA, ScpB and the Smc homodimer, in which ScpA and ScpB bind to the head domain of Smc. The presence of the three proteins is required for the association of the complex with DNA.

The protein localises to the cytoplasm. In terms of biological role, participates in chromosomal partition during cell division. May act via the formation of a condensin-like complex containing Smc and ScpB that pull DNA away from mid-cell into both cell halves. The sequence is that of Segregation and condensation protein A from Listeria monocytogenes serotype 4a (strain HCC23).